The primary structure comprises 887 residues: Translation initiation factor IF-2 (887 aa).

Disordered stretches follow at residues 31–87, 94–113, and 129–285; these read KLAQ…PRRI, SFVSEDLNSPQPPVPVDSDA, and VETE…KWRK. The segment covering 42–59 has biased composition (basic and acidic residues); that stretch reads SSSEKPSTKVPEKIAKEK. Basic and acidic residues-rich tracts occupy residues 150–171 and 199–212; these read VVAKEPPAPKKEPEVVVKKEPP and PKKEDKPAPKEKTK. A compositionally biased stretch (low complexity) spans 213–223; that stretch reads TTQTKPQQSSD. Basic and acidic residues predominate over residues 241 to 273; the sequence is YRRDVSKKSGSDFRDRAKKDDNPKAFTGRDRYG. Positions 393-562 constitute a tr-type G domain; the sequence is TRPPIVAFMG…ALQAEVLELK (170 aa). Residues 402–409 are G1; the sequence is GHVDHGKT. A GTP-binding site is contributed by 402-409; sequence GHVDHGKT. Residues 427-431 form a G2 region; the sequence is AITQH. Residues 448 to 451 are G3; the sequence is DTPG. Residues 448 to 452 and 502 to 505 each bind GTP; these read DTPGH and NKCD. The G4 stretch occupies residues 502–505; it reads NKCD. The tract at residues 538–540 is G5; the sequence is SAK.

Belongs to the TRAFAC class translation factor GTPase superfamily. Classic translation factor GTPase family. IF-2 subfamily.

The protein localises to the cytoplasm. One of the essential components for the initiation of protein synthesis. Protects formylmethionyl-tRNA from spontaneous hydrolysis and promotes its binding to the 30S ribosomal subunits. Also involved in the hydrolysis of GTP during the formation of the 70S ribosomal complex. This Chlamydia caviae (strain ATCC VR-813 / DSM 19441 / 03DC25 / GPIC) (Chlamydophila caviae) protein is Translation initiation factor IF-2.